The chain runs to 144 residues: Large ribosomal subunit protein uL13 (144 aa).

Belongs to the universal ribosomal protein uL13 family. Part of the 50S ribosomal subunit.

This protein is one of the early assembly proteins of the 50S ribosomal subunit, although it is not seen to bind rRNA by itself. It is important during the early stages of 50S assembly. This is Large ribosomal subunit protein uL13 from Ruminiclostridium cellulolyticum (strain ATCC 35319 / DSM 5812 / JCM 6584 / H10) (Clostridium cellulolyticum).